A 319-amino-acid polypeptide reads, in one-letter code: Forkhead box protein B1 (319 aa).

The fork-head DNA-binding region spans 13–107; it reads KPPYSYISLT…ENGSFLRRRK (95 aa). The segment at 278-310 is disordered; the sequence is LSNSSPSMSPTSPQTATSQSSPATPSDTLTNPS. Over residues 279–305 the composition is skewed to low complexity; sequence SNSSPSMSPTSPQTATSQSSPATPSDT.

As to expression, in early gastrulae, expressed in the inner layer of the posterior dorsal ectoderm and in non-involuted mesoderm. By the mid-gastrula stage, expressed solely in the posterior ectoderm. At the end of gastrulation, expressed in ectodermal regions fated to become diencephalon, midbrain and hindbrain, and weakly expressed in regions fated to become spinal cord and tailbud. At the neurula stage, expressed in the midbrain and posterior forebrain (diencephalon) but not in the more anterior forebrain (telencephalon). Also expressed posteriorly in rhombomere 5. At tailbud stages, expression remains in the anterior brain and is also detectable along the length of the central nervous system and in the tailbud.

It localises to the nucleus. In terms of biological role, probable transcription factor. May be involved in the early anteroposterior patterning of the neuroectoderm. The sequence is that of Forkhead box protein B1 from Xenopus laevis (African clawed frog).